The sequence spans 357 residues: NADH-quinone oxidoreductase subunit H (357 aa).

Transmembrane regions (helical) follow at residues Leu-26–Trp-46, Ala-92–Ile-112, Leu-127–Ala-147, Met-164–Ser-184, Gly-203–Ile-223, Phe-259–Leu-279, Val-294–Phe-314, and Leu-329–Met-349.

Belongs to the complex I subunit 1 family. As to quaternary structure, NDH-1 is composed of 14 different subunits. Subunits NuoA, H, J, K, L, M, N constitute the membrane sector of the complex.

The protein localises to the cell inner membrane. The enzyme catalyses a quinone + NADH + 5 H(+)(in) = a quinol + NAD(+) + 4 H(+)(out). Functionally, NDH-1 shuttles electrons from NADH, via FMN and iron-sulfur (Fe-S) centers, to quinones in the respiratory chain. The immediate electron acceptor for the enzyme in this species is believed to be ubiquinone. Couples the redox reaction to proton translocation (for every two electrons transferred, four hydrogen ions are translocated across the cytoplasmic membrane), and thus conserves the redox energy in a proton gradient. This subunit may bind ubiquinone. This chain is NADH-quinone oxidoreductase subunit H, found in Janthinobacterium sp. (strain Marseille) (Minibacterium massiliensis).